Here is a 213-residue protein sequence, read N- to C-terminus: Probable RNA 2'-phosphotransferase (213 aa).

This sequence belongs to the KptA/TPT1 family.

Functionally, removes the 2'-phosphate from RNA via an intermediate in which the phosphate is ADP-ribosylated by NAD followed by a presumed transesterification to release the RNA and generate ADP-ribose 1''-2''-cyclic phosphate (APPR&gt;P). May function as an ADP-ribosylase. The protein is Probable RNA 2'-phosphotransferase of Pyrobaculum aerophilum (strain ATCC 51768 / DSM 7523 / JCM 9630 / CIP 104966 / NBRC 100827 / IM2).